A 238-amino-acid polypeptide reads, in one-letter code: tRNA1(Val) (adenine(37)-N6)-methyltransferase (238 aa).

The protein belongs to the methyltransferase superfamily. tRNA (adenine-N(6)-)-methyltransferase family.

It is found in the cytoplasm. The enzyme catalyses adenosine(37) in tRNA1(Val) + S-adenosyl-L-methionine = N(6)-methyladenosine(37) in tRNA1(Val) + S-adenosyl-L-homocysteine + H(+). Its function is as follows. Specifically methylates the adenine in position 37 of tRNA(1)(Val) (anticodon cmo5UAC). The protein is tRNA1(Val) (adenine(37)-N6)-methyltransferase of Shewanella baltica (strain OS185).